Consider the following 123-residue polypeptide: Ribonuclease P protein component (123 aa).

This sequence belongs to the RnpA family. In terms of assembly, consists of a catalytic RNA component (M1 or rnpB) and a protein subunit.

The enzyme catalyses Endonucleolytic cleavage of RNA, removing 5'-extranucleotides from tRNA precursor.. Functionally, RNaseP catalyzes the removal of the 5'-leader sequence from pre-tRNA to produce the mature 5'-terminus. It can also cleave other RNA substrates such as 4.5S RNA. The protein component plays an auxiliary but essential role in vivo by binding to the 5'-leader sequence and broadening the substrate specificity of the ribozyme. In Streptococcus pneumoniae serotype 4 (strain ATCC BAA-334 / TIGR4), this protein is Ribonuclease P protein component.